Here is a 496-residue protein sequence, read N- to C-terminus: Glycogen synthase (496 aa).

Lysine 24 contacts ADP-alpha-D-glucose.

Belongs to the glycosyltransferase 1 family. Bacterial/plant glycogen synthase subfamily.

The enzyme catalyses [(1-&gt;4)-alpha-D-glucosyl](n) + ADP-alpha-D-glucose = [(1-&gt;4)-alpha-D-glucosyl](n+1) + ADP + H(+). The protein operates within glycan biosynthesis; glycogen biosynthesis. Synthesizes alpha-1,4-glucan chains using ADP-glucose. This is Glycogen synthase from Nitrosospira multiformis (strain ATCC 25196 / NCIMB 11849 / C 71).